Reading from the N-terminus, the 326-residue chain is Probable cell division protein WhiA (326 aa).

Residues Ser275 to Leu308 constitute a DNA-binding region (H-T-H motif).

Belongs to the WhiA family.

Involved in cell division and chromosome segregation. This is Probable cell division protein WhiA from Pseudarthrobacter chlorophenolicus (strain ATCC 700700 / DSM 12829 / CIP 107037 / JCM 12360 / KCTC 9906 / NCIMB 13794 / A6) (Arthrobacter chlorophenolicus).